Reading from the N-terminus, the 124-residue chain is Orexigenic neuropeptide QRFP (124 aa).

Residues 1-17 (MRGFRPLLSLLLPLSAC) form the signal peptide. Positions 18-79 (FPLLDRRGPT…REHTGFRLGR (62 aa)) are excised as a propeptide. The interval 63-101 (REQQASHREHTGFRLGRQDGSSEAAGFLPADSEKASGPL) is disordered. Position 122 is a phenylalanine amide (phenylalanine 122).

This sequence belongs to the RFamide neuropeptide family. Ligand for the G-protein coupled receptor QRFPR/GPR103. Expressed in the brain with highest levels in the periventricular hypothalamic nucleus and lateral hypothalamic areas. Expressed at moderate levels in the adrenal gland, eye, heart, intestine, liver, lung, kidney, mesenteric lymph node, ovary, placenta, Peyer patches, skin, spleen, stomach, testis, thymus and uterus.

The protein resides in the secreted. In terms of biological role, stimulates feeding and grooming behavior, metabolic rate and locomotor activity and increases blood pressure. May have orexigenic activity. May promote aldosterone secretion by the adrenal gland. The protein is Orexigenic neuropeptide QRFP of Mus musculus (Mouse).